A 273-amino-acid polypeptide reads, in one-letter code: MAMQFYASPEQIMRDRSELARKGIARGRSAVVLSYAGGVLFVAENLSSALHKVGEIYDRIGFAAVGRYNEFENLRRAGVRMADLNGLSYDRRDVTGRALANAFAQTLGAIFTEQSKPFEVEICVAQVGATTADDELYRLTYDGSVNDEPGRMAMGGQAEAITGVLKSNHRPDMSLGDAVKVAVQALGSVGGEGGAARTIAADQLEVAVLDRGRVGRTFRRVTGAALTVLLDDGAAGQPPSSSDTDTSAAEARKPTASAGSADLEGPEPERPDS.

Positions 231 to 273 are disordered; that stretch reads DDGAAGQPPSSSDTDTSAAEARKPTASAGSADLEGPEPERPDS. Residues 238-249 show a composition bias toward low complexity; the sequence is PPSSSDTDTSAA.

The protein belongs to the peptidase T1A family. As to quaternary structure, the 20S proteasome core is composed of 14 alpha and 14 beta subunits that assemble into four stacked heptameric rings, resulting in a barrel-shaped structure. The two inner rings, each composed of seven catalytic beta subunits, are sandwiched by two outer rings, each composed of seven alpha subunits. The catalytic chamber with the active sites is on the inside of the barrel. Has a gated structure, the ends of the cylinder being occluded by the N-termini of the alpha-subunits. Is capped by the proteasome-associated ATPase, ARC.

It is found in the cytoplasm. Its pathway is protein degradation; proteasomal Pup-dependent pathway. With respect to regulation, the formation of the proteasomal ATPase ARC-20S proteasome complex, likely via the docking of the C-termini of ARC into the intersubunit pockets in the alpha-rings, may trigger opening of the gate for substrate entry. Interconversion between the open-gate and close-gate conformations leads to a dynamic regulation of the 20S proteasome proteolysis activity. Functionally, component of the proteasome core, a large protease complex with broad specificity involved in protein degradation. The protein is Proteasome subunit alpha of Salinispora arenicola (strain CNS-205).